We begin with the raw amino-acid sequence, 702 residues long: Polyribonucleotide nucleotidyltransferase (702 aa).

Mg(2+)-binding residues include Asp-487 and Asp-493. One can recognise a KH domain in the interval 554 to 613; that stretch reads PKILTMQINPDKIRDVIGPSGKQINKIIEETGVKIDIEQDGTIFISSVNEEMNKKAKKII. An S1 motif domain is found at 623 to 691; sequence GQVYLGKVKR…KQGRVNLSRK (69 aa).

The protein belongs to the polyribonucleotide nucleotidyltransferase family. Requires Mg(2+) as cofactor.

It localises to the cytoplasm. It catalyses the reaction RNA(n+1) + phosphate = RNA(n) + a ribonucleoside 5'-diphosphate. Functionally, involved in mRNA degradation. Catalyzes the phosphorolysis of single-stranded polyribonucleotides processively in the 3'- to 5'-direction. This chain is Polyribonucleotide nucleotidyltransferase, found in Anoxybacillus flavithermus (strain DSM 21510 / WK1).